The primary structure comprises 254 residues: Probable electron transfer flavoprotein subunit beta (254 aa).

This sequence belongs to the ETF beta-subunit/FixA family. In terms of assembly, heterodimer of an alpha and a beta subunit. The cofactor is FAD. Requires AMP as cofactor.

Its subcellular location is the mitochondrion matrix. Its function is as follows. The electron transfer flavoprotein serves as a specific electron acceptor for several dehydrogenases, including five acyl-CoA dehydrogenases, glutaryl-CoA and sarcosine dehydrogenase. It transfers the electrons to the main mitochondrial respiratory chain via ETF-ubiquinone oxidoreductase (ETF dehydrogenase). This chain is Probable electron transfer flavoprotein subunit beta, found in Schizosaccharomyces pombe (strain 972 / ATCC 24843) (Fission yeast).